An 83-amino-acid polypeptide reads, in one-letter code: MTPETVQIASILGAAFAVGIGSLGPALGEGRAVAAAMEAIARQPEAAGTLSRTLFVGLAMIETMAIYCLVIALLLLFANPFTG.

Transmembrane regions (helical) follow at residues 8–28 (IASI…PALG) and 58–78 (LAMI…LLFA).

Belongs to the ATPase C chain family. As to quaternary structure, F-type ATPases have 2 components, F(1) - the catalytic core - and F(0) - the membrane proton channel. F(1) has five subunits: alpha(3), beta(3), gamma(1), delta(1), epsilon(1). F(0) has four main subunits: a(1), b(1), b'(1) and c(10-14). The alpha and beta chains form an alternating ring which encloses part of the gamma chain. F(1) is attached to F(0) by a central stalk formed by the gamma and epsilon chains, while a peripheral stalk is formed by the delta, b and b' chains.

The protein resides in the cell inner membrane. Functionally, f(1)F(0) ATP synthase produces ATP from ADP in the presence of a proton or sodium gradient. F-type ATPases consist of two structural domains, F(1) containing the extramembraneous catalytic core and F(0) containing the membrane proton channel, linked together by a central stalk and a peripheral stalk. During catalysis, ATP synthesis in the catalytic domain of F(1) is coupled via a rotary mechanism of the central stalk subunits to proton translocation. Key component of the F(0) channel; it plays a direct role in translocation across the membrane. A homomeric c-ring of between 10-14 subunits forms the central stalk rotor element with the F(1) delta and epsilon subunits. The chain is ATP synthase subunit c 2 from Cereibacter sphaeroides (strain ATCC 17029 / ATH 2.4.9) (Rhodobacter sphaeroides).